The primary structure comprises 151 residues: Large ribosomal subunit protein bL9 (151 aa).

It belongs to the bacterial ribosomal protein bL9 family.

Functionally, binds to the 23S rRNA. The polypeptide is Large ribosomal subunit protein bL9 (Prochlorococcus marinus (strain MIT 9515)).